A 173-amino-acid polypeptide reads, in one-letter code: Adenine phosphoribosyltransferase (173 aa).

This sequence belongs to the purine/pyrimidine phosphoribosyltransferase family. In terms of assembly, homodimer.

The protein localises to the cytoplasm. It catalyses the reaction AMP + diphosphate = 5-phospho-alpha-D-ribose 1-diphosphate + adenine. Its pathway is purine metabolism; AMP biosynthesis via salvage pathway; AMP from adenine: step 1/1. Its function is as follows. Catalyzes a salvage reaction resulting in the formation of AMP, that is energically less costly than de novo synthesis. This chain is Adenine phosphoribosyltransferase, found in Listeria monocytogenes serotype 4b (strain CLIP80459).